We begin with the raw amino-acid sequence, 700 residues long: Tectonic-2 (700 aa).

Residues 1–25 (MGSLSPLSFLWGLLLLQGVLRPLRG) form the signal peptide. Residues 26-665 (DPVFIPPFIR…YYQGEPRPQC (640 aa)) lie on the Extracellular side of the membrane. 5 N-linked (GlcNAc...) asparagine glycosylation sites follow: Asn76, Asn82, Asn146, Asn156, and Asn389. Residues 666 to 682 (VAKGLMLLSLLMLAILL) form a helical membrane-spanning segment. Residues 683–700 (RHPWVGMCKAWSSASIQH) are Cytoplasmic-facing.

It belongs to the tectonic family. Part of the tectonic-like complex (also named B9 complex).

The protein resides in the membrane. It is found in the cytoplasm. The protein localises to the cytoskeleton. Its subcellular location is the cilium basal body. Component of the tectonic-like complex, a complex localized at the transition zone of primary cilia and acting as a barrier that prevents diffusion of transmembrane proteins between the cilia and plasma membranes. Required for hedgehog signaling transduction. This chain is Tectonic-2 (Tctn2), found in Rattus norvegicus (Rat).